Here is a 142-residue protein sequence, read N- to C-terminus: uncharacterized protein (142 aa).

The disordered stretch occupies residues isoleucine 19 to serine 54. A compositionally biased stretch (basic residues) spans histidine 26–histidine 35.

This is an uncharacterized protein from Saccharomyces cerevisiae (strain ATCC 204508 / S288c) (Baker's yeast).